The primary structure comprises 308 residues: Serpentine receptor class V-1 (308 aa).

7 helical membrane-spanning segments follow: residues 15–35 (VSTAISLVCLPINILFVYILF), 46–68 (PFFRLCIHLSIADILMELFSTFF), 88–108 (VVPIAGMQYLGHAQAFGIIFI), 135–155 (LLLIQWITPLFFMAPLFSTDF), 184–204 (AMVDGILINLIVLLLYGAIFI), 222–242 (LALSAFIIFICYLALGVCSLL), and 256–276 (TMWFVVNDVLCNSSALVLLAL).

It belongs to the nematode receptor-like protein srv family.

The protein localises to the membrane. This is Serpentine receptor class V-1 (srv-1) from Caenorhabditis elegans.